We begin with the raw amino-acid sequence, 377 residues long: Circumsporozoite protein (377 aa).

A signal peptide spans 1–22 (MKNFILLAVSSILLVDLFPTHC). The interval 51–294 (HVGQSASRGR…NNEGANAPNE (244 aa)) is disordered. Residues 72–100 (DAKKKKDGKKAEPKNPRENKLKQPGDRAD) show a composition bias toward basic and acidic residues. The required for the binding to heparan sulfate proteoglycans (HSPGs) on the surface of host hepatocytes stretch occupies residues 80–88 (KKAEPKNPR). The region I; contains the proteolytic cleavage site stretch occupies residues 91–95 (KLKQP). A run of 20 repeats spans residues 95–103 (PGDRADGQP), 104–112 (AGDRADGQP), 113–121 (AGDRADGQP), 122–130 (AGDRADGQP), 131–139 (AGDRAAGQP), 140–148 (AGDRADGQP), 149–157 (AGDRADGQP), 158–166 (AGDRADGQP), 167–175 (AGDRADGQP), 176–184 (AGDRAAGQP), 185–193 (AGDRAAGQP), 194–202 (AGDRADGQP), 203–211 (AGDRAAGQP), 212–220 (AGDRADGQP), 221–229 (AGDRAAGQP), 230–238 (AGDRADGQP), 239–247 (AGDRAAGQP), 248–256 (AGDRAAGQP), 257–265 (AGDRAAGQA), and 266–274 (AGDRAAGQA). A 20 X 9 AA tandem repeats of [PA]-G-D-R-A-[DA]-G-Q-[PA] region spans residues 95-274 (PGDRADGQPA…AAGDRAAGQA (180 aa)). A compositionally biased stretch (low complexity) spans 236-273 (GQPAGDRAAGQPAGDRAAGQPAGDRAAGQAAGDRAAGQ). Gly residues predominate over residues 274-283 (AAGGNAGGQG). Positions 284 to 293 (QNNEGANAPN) are enriched in low complexity. A TSP type-1 domain is found at 303 to 355 (KVRATVGTEWTPCSVTCGVGVRVRRRVNAANKKPEDLTLNDLETDVCTMDKCA). Disulfide bonds link Cys-315–Cys-349 and Cys-319–Cys-354. The O-linked (Fuc) threonine glycan is linked to Thr-318. Cys-354 carries GPI-anchor amidated cysteine lipidation. The propeptide at 355 to 377 (AGIFNVVSNSLGLVILLVLALFN) is removed in mature form.

The protein belongs to the plasmodium circumsporozoite protein family. Post-translationally, during host cell invasion, proteolytically cleaved at the cell membrane in the region I by a papain-like cysteine protease of parasite origin. Cleavage is triggered by the sporozoite contact with highly sulfated heparan sulfate proteoglycans (HSPGs) present on the host hepatocyte cell surface. Cleavage exposes the TSP type-1 (TSR) domain and is required for productive invasion of host hepatocytes but not for adhesion to the host cell membrane. Cleavage is dispensable for sporozoite development in the oocyst, motility and for traversal of host and vector cells. O-glycosylated; maybe by POFUT2.

It localises to the cell membrane. Its subcellular location is the cytoplasm. Its function is as follows. Essential sporozoite protein. In the mosquito vector, required for sporozoite development in the oocyst, migration through the vector hemolymph and entry into the vector salivary glands. In the vertebrate host, required for sporozoite migration through the host dermis and infection of host hepatocytes. Binds to highly sulfated heparan sulfate proteoglycans (HSPGs) on the surface of host hepatocytes. In the vertebrate host, binds to highly sulfated heparan sulfate proteoglycans (HSPGs) on the surface of host hepatocytes and is required for sporozoite invasion of the host hepatocytes. The protein is Circumsporozoite protein of Plasmodium vivax (strain Salvador I).